Here is a 122-residue protein sequence, read N- to C-terminus: MVKSTVPTRPNKYWPGVVAIGLVSLFIFLSVSNQKHSTTSGDNIHKFSNGGTYRDGSKCITYNRNSPLAYNGSSSNNTLFWLCLLGLSMVWIAYCGYKSLSGQWHSCQHDKNERNFLFECFE.

Topologically, residues 1 to 12 (MVKSTVPTRPNK) are cytoplasmic. The helical transmembrane segment at 13 to 33 (YWPGVVAIGLVSLFIFLSVSN) threads the bilayer. Residues 34 to 76 (QKHSTTSGDNIHKFSNGGTYRDGSKCITYNRNSPLAYNGSSSN) are Lumenal-facing. A helical transmembrane segment spans residues 77-97 (NTLFWLCLLGLSMVWIAYCGY). The Cytoplasmic segment spans residues 98 to 122 (KSLSGQWHSCQHDKNERNFLFECFE).

Belongs to the virgaviridae/benyvirus TGB2 movement protein family. Interacts with movement protein TGB3. TGB1-TGB3-TGB2 complex formation is enhanced by ATP hydrolysis.

The protein localises to the host cell junction. Its subcellular location is the host plasmodesma. It localises to the host endoplasmic reticulum membrane. The protein resides in the host cytoplasm. It is found in the host cytoskeleton. Participates in the transport of viral genome to neighboring plant cells directly through plasmodesmata, without any budding. TGBp2 and TGBp3 are necessary for intracellular delivery of TGBp1-containing vRNPs to plasmodesmata. Can gate plasmodesmata and increase their size exclusion limit. To a lesser extent than TGB3, induces host actin cytoskeleton network thickening, which probably plays a major role in virus cell-to-cell movement. The polypeptide is Movement protein TGB2 (Peanut clump virus (isolate 87/TGTA2) (PCV)).